The chain runs to 148 residues: Thioredoxin H8 (148 aa).

Positions 1-145 constitute a Thioredoxin domain; that stretch reads MGANVSTPDQ…LERKLNKYTQ (145 aa). Residues cysteine 71 and cysteine 74 each act as nucleophile in the active site. The cysteines at positions 71 and 74 are disulfide-linked.

The protein belongs to the thioredoxin family. Plant H-type subfamily.

It is found in the cytoplasm. Its function is as follows. Probable thiol-disulfide oxidoreductase that may be involved in the redox regulation of a number of cytosolic enzymes. This Arabidopsis thaliana (Mouse-ear cress) protein is Thioredoxin H8 (TRX8).